The following is a 91-amino-acid chain: Protein transport protein sft1 (91 aa).

Residues 1–68 are Cytoplasmic-facing; sequence MNDQNERRLE…RVVRSAGRRR (68 aa). The helical; Anchor for type IV membrane protein transmembrane segment at 69-86 threads the bilayer; sequence IMTMVLAIVGSILIIYYA. Residues 87–91 are Lumenal-facing; it reads SKWFF.

As to quaternary structure, component of a SNARE complex consisting of sed5, gos1, ykt6 and sft1.

The protein localises to the golgi apparatus membrane. In terms of biological role, vesicle SNARE required for retrograde transport within the Golgi complex. This Schizosaccharomyces pombe (strain 972 / ATCC 24843) (Fission yeast) protein is Protein transport protein sft1 (sft1).